Reading from the N-terminus, the 216-residue chain is Thymidylate kinase (216 aa).

10–17 (GIDGCGKT) contacts ATP.

Belongs to the thymidylate kinase family.

It carries out the reaction dTMP + ATP = dTDP + ADP. Its function is as follows. Phosphorylation of dTMP to form dTDP in both de novo and salvage pathways of dTTP synthesis. The protein is Thymidylate kinase of Prochlorococcus marinus (strain MIT 9303).